We begin with the raw amino-acid sequence, 432 residues long: Serine/threonine-protein kinase CDG1 (432 aa).

Residues Cys-4 and Cys-6 are each lipidated (S-palmitoyl cysteine). A compositionally biased stretch (basic residues) spans 15-24 (LKDKSHKRSI). The disordered stretch occupies residues 15-47 (LKDKSHKRSIRNQTSSSSAQPAGTAKEVDSSSS). A compositionally biased stretch (polar residues) spans 25–35 (RNQTSSSSAQP). Residues Ser-44 and Ser-47 each carry the phosphoserine modification. One can recognise a Protein kinase domain in the interval 74–354 (FRNESLIGRG…SQVVECLKYI (281 aa)). ATP is bound by residues 80–88 (IGRGGFGTV) and Lys-102. Tyr-147 carries the post-translational modification Phosphotyrosine. Catalysis depends on Asp-200, which acts as the Proton acceptor. Phosphoserine occurs at positions 204 and 234. Residues Thr-235 and Thr-240 each carry the phosphothreonine modification. Tyr-248 is modified (phosphotyrosine).

It belongs to the protein kinase superfamily. Ser/Thr protein kinase family. As to quaternary structure, interacts with BSU1, BSL1 and BRI1. Post-translationally, phosphorylated at Ser-44, Ser-47 and Ser-234 by BRI1. As to expression, expressed at high levels in the stamen and pollen grains. Expressed at a very low level in vegetative tissues.

It localises to the cell membrane. The catalysed reaction is L-seryl-[protein] + ATP = O-phospho-L-seryl-[protein] + ADP + H(+). It carries out the reaction L-threonyl-[protein] + ATP = O-phospho-L-threonyl-[protein] + ADP + H(+). With respect to regulation, activated by phosphorylation at Ser-234. Serine/threonine-protein kinase involved in the positive regulation of brassinosteroid (BR) signaling and plant growth. Mediates BR signal transduction from BRI1 receptor kinase to BSU1 phosphatase. After activation by phosphorylation at Ser-234 by BRI1, CDG1 phosphorylates BSU1 at 'Ser-764' in the phosphatase domain, increasing the ability of BSU1 to inactivate the negative regulator of BR signaling ASK7/BIN2 by dephosphorylation at 'Tyr-200'. The full kinase activity of CDG1 is required for its biological function. The polypeptide is Serine/threonine-protein kinase CDG1 (Arabidopsis thaliana (Mouse-ear cress)).